Consider the following 604-residue polypeptide: Sulfite reductase [NADPH] flavoprotein alpha-component (604 aa).

Residues 65 to 203 (VTILYGSQTG…AAGQWHADVL (139 aa)) form the Flavodoxin-like domain. FMN-binding positions include 71–76 (SQTGNG), 118–121 (STHG), and 154–163 (LGDSSYEFFC). One can recognise an FAD-binding FR-type domain in the interval 236 to 453 (QNPYSAEVLV…VEPNKHFRLP (218 aa)). FAD contacts are provided by residues threonine 324, leucine 358, 392 to 395 (RLYS), 410 to 412 (TVA), and 425 to 428 (GGAS). NADP(+) contacts are provided by residues 524–525 (SR), 530–534 (KIYVQ), and aspartate 566. Tyrosine 604 contacts FAD.

The protein belongs to the NADPH-dependent sulphite reductase flavoprotein subunit CysJ family. This sequence in the N-terminal section; belongs to the flavodoxin family. It in the C-terminal section; belongs to the flavoprotein pyridine nucleotide cytochrome reductase family. In terms of assembly, alpha(8)-beta(8). The alpha component is a flavoprotein, the beta component is a hemoprotein. The cofactor is FAD. FMN serves as cofactor.

The catalysed reaction is hydrogen sulfide + 3 NADP(+) + 3 H2O = sulfite + 3 NADPH + 4 H(+). The protein operates within sulfur metabolism; hydrogen sulfide biosynthesis; hydrogen sulfide from sulfite (NADPH route): step 1/1. Component of the sulfite reductase complex that catalyzes the 6-electron reduction of sulfite to sulfide. This is one of several activities required for the biosynthesis of L-cysteine from sulfate. The flavoprotein component catalyzes the electron flow from NADPH -&gt; FAD -&gt; FMN to the hemoprotein component. In Shewanella sp. (strain ANA-3), this protein is Sulfite reductase [NADPH] flavoprotein alpha-component.